The primary structure comprises 381 residues: Succinyl-diaminopimelate desuccinylase (381 aa).

A Zn(2+)-binding site is contributed by H70. Residue D72 is part of the active site. D103 is a Zn(2+) binding site. E136 functions as the Proton acceptor in the catalytic mechanism. Positions 137, 165, and 354 each coordinate Zn(2+).

The protein belongs to the peptidase M20A family. DapE subfamily. As to quaternary structure, homodimer. The cofactor is Zn(2+). Requires Co(2+) as cofactor.

It catalyses the reaction N-succinyl-(2S,6S)-2,6-diaminopimelate + H2O = (2S,6S)-2,6-diaminopimelate + succinate. It functions in the pathway amino-acid biosynthesis; L-lysine biosynthesis via DAP pathway; LL-2,6-diaminopimelate from (S)-tetrahydrodipicolinate (succinylase route): step 3/3. Catalyzes the hydrolysis of N-succinyl-L,L-diaminopimelic acid (SDAP), forming succinate and LL-2,6-diaminopimelate (DAP), an intermediate involved in the bacterial biosynthesis of lysine and meso-diaminopimelic acid, an essential component of bacterial cell walls. The polypeptide is Succinyl-diaminopimelate desuccinylase (Roseobacter denitrificans (strain ATCC 33942 / OCh 114) (Erythrobacter sp. (strain OCh 114))).